We begin with the raw amino-acid sequence, 453 residues long: Signal recognition particle protein (453 aa).

Residues 107-114, 190-194, and 248-251 contribute to the GTP site; these read GLQGAGKT, DTAGR, and TKVD.

It belongs to the GTP-binding SRP family. SRP54 subfamily. As to quaternary structure, part of the signal recognition particle protein translocation system, which is composed of SRP and FtsY. SRP is a ribonucleoprotein composed of Ffh and a 4.5S RNA molecule.

It is found in the cytoplasm. The catalysed reaction is GTP + H2O = GDP + phosphate + H(+). In terms of biological role, involved in targeting and insertion of nascent membrane proteins into the cytoplasmic membrane. Binds to the hydrophobic signal sequence of the ribosome-nascent chain (RNC) as it emerges from the ribosomes. The SRP-RNC complex is then targeted to the cytoplasmic membrane where it interacts with the SRP receptor FtsY. Interaction with FtsY leads to the transfer of the RNC complex to the Sec translocase for insertion into the membrane, the hydrolysis of GTP by both Ffh and FtsY, and the dissociation of the SRP-FtsY complex into the individual components. The chain is Signal recognition particle protein from Escherichia coli O157:H7.